Consider the following 200-residue polypeptide: Protein-methionine-sulfoxide reductase heme-binding subunit MsrQ (200 aa).

5 helical membrane-spanning segments follow: residues I8–Y28, L54–I74, L79–E99, P116–F136, and F153–S173.

Belongs to the MsrQ family. Heterodimer of a catalytic subunit (MsrP) and a heme-binding subunit (MsrQ). FMN serves as cofactor. The cofactor is heme b.

The protein localises to the cell inner membrane. Functionally, part of the MsrPQ system that repairs oxidized periplasmic proteins containing methionine sulfoxide residues (Met-O), using respiratory chain electrons. Thus protects these proteins from oxidative-stress damage caused by reactive species of oxygen and chlorine generated by the host defense mechanisms. MsrPQ is essential for the maintenance of envelope integrity under bleach stress, rescuing a wide series of structurally unrelated periplasmic proteins from methionine oxidation. MsrQ provides electrons for reduction to the reductase catalytic subunit MsrP, using the quinone pool of the respiratory chain. The protein is Protein-methionine-sulfoxide reductase heme-binding subunit MsrQ of Cronobacter sakazakii (strain ATCC BAA-894) (Enterobacter sakazakii).